Reading from the N-terminus, the 260-residue chain is Thiazole synthase (260 aa).

The active-site Schiff-base intermediate with DXP is Lys96. Residues Gly157, 184–185, and 206–207 contribute to the 1-deoxy-D-xylulose 5-phosphate site; these read AG and NT.

This sequence belongs to the ThiG family. Homotetramer. Forms heterodimers with either ThiH or ThiS.

The protein localises to the cytoplasm. It catalyses the reaction [ThiS sulfur-carrier protein]-C-terminal-Gly-aminoethanethioate + 2-iminoacetate + 1-deoxy-D-xylulose 5-phosphate = [ThiS sulfur-carrier protein]-C-terminal Gly-Gly + 2-[(2R,5Z)-2-carboxy-4-methylthiazol-5(2H)-ylidene]ethyl phosphate + 2 H2O + H(+). It participates in cofactor biosynthesis; thiamine diphosphate biosynthesis. Functionally, catalyzes the rearrangement of 1-deoxy-D-xylulose 5-phosphate (DXP) to produce the thiazole phosphate moiety of thiamine. Sulfur is provided by the thiocarboxylate moiety of the carrier protein ThiS. In vitro, sulfur can be provided by H(2)S. The protein is Thiazole synthase of Rhodopseudomonas palustris (strain HaA2).